A 458-amino-acid chain; its full sequence is Phosphoglucosamine mutase (458 aa).

S106 (phosphoserine intermediate) is an active-site residue. The Mg(2+) site is built by S106, D247, D249, and D251. At S106 the chain carries Phosphoserine.

This sequence belongs to the phosphohexose mutase family. Mg(2+) serves as cofactor. In terms of processing, activated by phosphorylation.

The enzyme catalyses alpha-D-glucosamine 1-phosphate = D-glucosamine 6-phosphate. Its function is as follows. Catalyzes the conversion of glucosamine-6-phosphate to glucosamine-1-phosphate. In Chlamydia caviae (strain ATCC VR-813 / DSM 19441 / 03DC25 / GPIC) (Chlamydophila caviae), this protein is Phosphoglucosamine mutase.